Consider the following 440-residue polypeptide: Histidinol dehydrogenase (440 aa).

Residues Tyr-133, Gln-194, and Asn-217 each contribute to the NAD(+) site. Substrate contacts are provided by Ser-240, Gln-262, and His-265. Residues Gln-262 and His-265 each coordinate Zn(2+). Active-site proton acceptor residues include Glu-330 and His-331. 4 residues coordinate substrate: His-331, Asp-364, Glu-418, and His-423. Position 364 (Asp-364) interacts with Zn(2+). Residue His-423 coordinates Zn(2+).

The protein belongs to the histidinol dehydrogenase family. Zn(2+) is required as a cofactor.

The enzyme catalyses L-histidinol + 2 NAD(+) + H2O = L-histidine + 2 NADH + 3 H(+). It functions in the pathway amino-acid biosynthesis; L-histidine biosynthesis; L-histidine from 5-phospho-alpha-D-ribose 1-diphosphate: step 9/9. Catalyzes the sequential NAD-dependent oxidations of L-histidinol to L-histidinaldehyde and then to L-histidine. This is Histidinol dehydrogenase from Nitrosospira multiformis (strain ATCC 25196 / NCIMB 11849 / C 71).